Consider the following 96-residue polypeptide: uncharacterized protein (96 aa).

A helical transmembrane segment spans residues 53 to 71 (VLLMPLLQSFVLSLALMGV).

The protein localises to the membrane. This is an uncharacterized protein from Saccharomyces cerevisiae (strain ATCC 204508 / S288c) (Baker's yeast).